The chain runs to 389 residues: Gastricsin (389 aa).

An N-terminal signal peptide occupies residues 1–16; sequence MKWMVVVLLCLQLLEA. Positions 17-59 are cleaved as a propeptide — activation peptide; that stretch reads KVVKVPLKKLKSLRETMKEKGLLEEFLKNHKYDPAQKYRYTDF. Positions 73 to 386 constitute a Peptidase A1 domain; it reads YFGEISIGTP…DMGNNRVGFA (314 aa). The active site involves D91. 2 disulfide bridges follow: C104-C109 and C268-C272. D277 is a catalytic residue. A disulfide bond links C311 and C344.

The protein belongs to the peptidase A1 family.

The protein resides in the secreted. It catalyses the reaction More restricted specificity than pepsin A, but shows preferential cleavage at Tyr-|-Xaa bonds. High activity on hemoglobin.. Its function is as follows. Hydrolyzes a variety of proteins. The polypeptide is Gastricsin (PGC) (Rhinolophus ferrumequinum (Greater horseshoe bat)).